We begin with the raw amino-acid sequence, 120 residues long: Large ribosomal subunit protein uL18 (120 aa).

This sequence belongs to the universal ribosomal protein uL18 family. As to quaternary structure, part of the 50S ribosomal subunit. Part of the 5S rRNA/L5/L18/L25 subcomplex. Contacts the 23S rRNA and 5S rRNA. Required for catalysis of RNase M5.

In terms of biological role, this is one of the proteins that bind and probably mediate the attachment of the 5S RNA into the large ribosomal subunit, where it forms part of the central protuberance. Required for correct processing of both the 5' and 3' ends of 5S rRNA precursor, which is does in conjunction with ribonuclease M5 (RNase M5, rnmV). Possibly folds the 5S rRNA precursor into the correct conformation, thus acting as a chaperone. This Bacillus subtilis (strain 168) protein is Large ribosomal subunit protein uL18.